The sequence spans 100 residues: Urease subunit gamma (100 aa).

Belongs to the urease gamma subunit family. Heterotrimer of UreA (gamma), UreB (beta) and UreC (alpha) subunits. Three heterotrimers associate to form the active enzyme.

It is found in the cytoplasm. It catalyses the reaction urea + 2 H2O + H(+) = hydrogencarbonate + 2 NH4(+). The protein operates within nitrogen metabolism; urea degradation; CO(2) and NH(3) from urea (urease route): step 1/1. In Rhizobium etli (strain ATCC 51251 / DSM 11541 / JCM 21823 / NBRC 15573 / CFN 42), this protein is Urease subunit gamma.